We begin with the raw amino-acid sequence, 115 residues long: uncharacterized protein (115 aa).

This is an uncharacterized protein from Human herpesvirus 6A (strain Uganda-1102) (HHV-6 variant A).